Reading from the N-terminus, the 148-residue chain is Transcriptional regulator MraZ (148 aa).

SpoVT-AbrB domains lie at 5–51 and 80–123; these read VATV…PLPE and AHDI…NEAR.

The protein belongs to the MraZ family. Forms oligomers.

The protein resides in the cytoplasm. Its subcellular location is the nucleoid. This chain is Transcriptional regulator MraZ, found in Thiobacillus denitrificans (strain ATCC 25259 / T1).